We begin with the raw amino-acid sequence, 182 residues long: Oligoribonuclease (182 aa).

One can recognise an Exonuclease domain in the interval 8-171; the sequence is LLWLDMEMTG…ADIYESIDEL (164 aa). The active site involves Y129.

It belongs to the oligoribonuclease family.

The protein resides in the cytoplasm. Its function is as follows. 3'-to-5' exoribonuclease specific for small oligoribonucleotides. The polypeptide is Oligoribonuclease (Thiobacillus denitrificans (strain ATCC 25259 / T1)).